We begin with the raw amino-acid sequence, 211 residues long: Glycerol-3-phosphate acyltransferase 2 (211 aa).

The next 5 membrane-spanning stretches (helical) occupy residues 6-26 (FASL…VVVG), 57-77 (IIVF…PVIF), 82-102 (HYLC…PIFL), 124-144 (FFLI…MVSL), and 148-168 (ISVV…LSII).

The protein belongs to the PlsY family. In terms of assembly, probably interacts with PlsX.

Its subcellular location is the cell membrane. It catalyses the reaction an acyl phosphate + sn-glycerol 3-phosphate = a 1-acyl-sn-glycero-3-phosphate + phosphate. It functions in the pathway lipid metabolism; phospholipid metabolism. In terms of biological role, catalyzes the transfer of an acyl group from acyl-phosphate (acyl-PO(4)) to glycerol-3-phosphate (G3P) to form lysophosphatidic acid (LPA). This enzyme utilizes acyl-phosphate as fatty acyl donor, but not acyl-CoA or acyl-ACP. The sequence is that of Glycerol-3-phosphate acyltransferase 2 from Lactobacillus acidophilus (strain ATCC 700396 / NCK56 / N2 / NCFM).